The primary structure comprises 223 residues: UPF0441 protein YgiB (223 aa).

Low complexity predominate over residues 178–195; sequence TVPKTAMAPKPATTTTVT. The segment at 178-223 is disordered; the sequence is TVPKTAMAPKPATTTTVTRGGFGESVAKQSTMQRSAAGTSTRSMGG. Residues 204 to 223 are compositionally biased toward polar residues; sequence AKQSTMQRSAAGTSTRSMGG.

This sequence belongs to the UPF0441 family.

This is UPF0441 protein YgiB from Salmonella enteritidis PT4 (strain P125109).